Reading from the N-terminus, the 438-residue chain is Putative cytochrome P450 140 (438 aa).

C381 is a binding site for heme.

The protein belongs to the cytochrome P450 family. It depends on heme as a cofactor.

This is Putative cytochrome P450 140 (cyp140) from Mycobacterium bovis (strain ATCC BAA-935 / AF2122/97).